A 75-amino-acid polypeptide reads, in one-letter code: Cytoplasmic envelopment protein 3 (75 aa).

Residue G2 is the site of N-myristoyl glycine; by host attachment. Positions 53 to 65 (EGLEYDEDSENDE) are enriched in acidic residues. The segment at 53–75 (EGLEYDEDSENDELLFLPNKKPN) is disordered.

It belongs to the herpesviridae cytoplasmic envelopment protein 3 family. In terms of assembly, interacts with BGLF2; this interaction is essential for the proper localization of each protein to the assembly complex and thus for the production of infectious virus. Post-translationally, myristoylation and palmitoylation (probably on one or more of the nearby cysteines at the N-terminus) enable membrane-binding and Golgi apparatus-specific targeting and are essential for efficient packaging. Phosphorylated. Phosphorylation does not seem to be required for recycling to the host Golgi apparatus. Packaging is selective for underphosphorylated forms.

It localises to the virion tegument. The protein resides in the virion membrane. The protein localises to the host cell membrane. Its subcellular location is the host Golgi apparatus membrane. Functionally, plays an important role in the cytoplasmic envelopment of tegument proteins and capsids during the assembly and egress processes. Also participates in viral entry at the fusion step probably by regulating the core fusion machinery. This chain is Cytoplasmic envelopment protein 3, found in Homo sapiens (Human).